A 502-amino-acid polypeptide reads, in one-letter code: MDIKVHFHDFSHVRIDCEESTFHELRDFFSFEADGYRFNPRFRYGNWDGRIRLLDYNRLLPFGLVGQIKKFCDNFGYKAWIDPQINEKEELSRKDFDEWLSKLEIYSGNKRIEPHWYQKDAVFEGLVNRRRILNLPTSAGKSLIQALLARYYLENYEGKILIIVPTTALTTQMADDFVDYRLFSHAMIKKIGGGASKDDKYKNDAPVVVGTWQTVVKQPKEWFSQFGMMMNDECHLATGKSISSIISGLNNCMFKFGLSGSLRDGKANIMQYVGMFGEIFKPVTTSKLMEDGQVTELKINSIFLRYPDEFTTKLKGKTYQEEIKIITGLSKRNKWIAKLAIKLAQKDENAFVMFKHVSHGKAIFDLIKNEYDKVYYVSGEVDTETRNIMKTLAENGKGIIIVASYGVFSTGISVKNLHHVVLAHGVKSKIIVLQTIGRVLRKHGSKTIATVWDLIDSAGVKPKSANTKKKYVHLNYLLKHGIDRIQRYADEKFNYVMKTVNL.

A Helicase ATP-binding domain is found at 122–280 (VFEGLVNRRR…QYVGMFGEIF (159 aa)). 135–142 (LPTSAGKS) contacts ATP. The DEAH box motif lies at 232-235 (DECH). Positions 335–501 (WIAKLAIKLA…KFNYVMKTVN (167 aa)) constitute a Helicase C-terminal domain.

As to quaternary structure, probably interacts with UvsW.1. Interacts with gp32. The cofactor is Mg(2+).

It carries out the reaction Couples ATP hydrolysis with the unwinding of duplex DNA by translocating in the 3'-5' direction.. The catalysed reaction is ATP + H2O = ADP + phosphate + H(+). Unwinding activity is strongly stimulated by single-stranded binding protein gp32, the ssDNA annealing activity is partially inhibited by gp32 and strongly inhibited by ATP-gamma-S. Another study did not find gp32 stimulation of helicase activity. Holliday junction (HJ) branch migration is inhibited by ATP-gamma-S. In terms of biological role, plays important roles in recombination-dependent DNA repair and the reorganization of stalled replication forks during viral DNA synthesis. Active on in vivo-derived T4 DNA; viral DNA is highly modified by hydroxymethylation and glucosylation of cytosine residues. Helps process Holliday junction (HJ) intermediates to mature products by catalyzing branch migration. Probably able to catalyze replication fork regression. Unwinds HJ and Y-branched but not linear double-stranded (ds)DNA; unwinding requires ATP and Mg(2+). Unwinds dsDNA with a 3'-single-stranded (ss)DNA overhang, suggesting it is a 3'-5' helicase. Another study does not find this activity. Unwinds D- and R-loops. Also anneals ssDNA; ATP stimulates annealing. Has ssDNA and dsDNA-stimulated ATPase activity, also hydrolyzes GTP in the presence of DNA. The protein is ATP-dependent DNA helicase uvsW of Enterobacteria phage T4 (Bacteriophage T4).